The following is a 629-amino-acid chain: tRNA uridine 5-carboxymethylaminomethyl modification enzyme MnmG (629 aa).

Residues 13–18 (GGGHAG), valine 125, and serine 180 each bind FAD. 273-287 (GPRYCPSIEDKVMRF) is an NAD(+) binding site. Glutamine 370 is an FAD binding site.

Belongs to the MnmG family. Homodimer. Heterotetramer of two MnmE and two MnmG subunits. Requires FAD as cofactor.

Its subcellular location is the cytoplasm. NAD-binding protein involved in the addition of a carboxymethylaminomethyl (cmnm) group at the wobble position (U34) of certain tRNAs, forming tRNA-cmnm(5)s(2)U34. In Salmonella agona (strain SL483), this protein is tRNA uridine 5-carboxymethylaminomethyl modification enzyme MnmG.